A 342-amino-acid polypeptide reads, in one-letter code: MDANKEKALQAALQQIDRQFGKGTVMRMGDKELEAIPAVSTGSLGLDVALGIGGLPKGRIVEIYGPESSGKTTLTLQVIAEAQRKGGTCAFVDAEHALDPIYAAKLGVNVDDLIVSQPDTGEQALEVADMLVRSGAIDVLVVDSVAALTPKAEIEGEMGDHHVGLQARLMSQALRKITGNIKNANCLAIFINQIRMKIGVMFGNPETTTGGNALKFYSSVRLDIRRIGSVKDGDEVIGSETRVKVVKNKVAPPFKQTEFQILYGTGINRLGEVIDYGVKLGLIDKAGAWYSYNGDKIGQGKNNAIQYLREHSDVAQTLEDRLKAELLGQSFDEAVEAEAESE.

65–72 (GPESSGKT) contacts ATP.

Belongs to the RecA family.

Its subcellular location is the cytoplasm. Its function is as follows. Can catalyze the hydrolysis of ATP in the presence of single-stranded DNA, the ATP-dependent uptake of single-stranded DNA by duplex DNA, and the ATP-dependent hybridization of homologous single-stranded DNAs. It interacts with LexA causing its activation and leading to its autocatalytic cleavage. This is Protein RecA from Teredinibacter turnerae (strain ATCC 39867 / T7901).